Reading from the N-terminus, the 347-residue chain is Protein pelota homolog (347 aa).

The protein belongs to the eukaryotic release factor 1 family. Pelota subfamily. As to quaternary structure, monomer. A divalent metal cation serves as cofactor.

The protein localises to the cytoplasm. Functionally, may function in recognizing stalled ribosomes, interact with stem-loop structures in stalled mRNA molecules, and effect endonucleolytic cleavage of the mRNA. May play a role in the release non-functional ribosomes and degradation of damaged mRNAs. Has endoribonuclease activity. The chain is Protein pelota homolog from Methanocaldococcus jannaschii (strain ATCC 43067 / DSM 2661 / JAL-1 / JCM 10045 / NBRC 100440) (Methanococcus jannaschii).